Consider the following 124-residue polypeptide: Tax1-binding protein 3 homolog (124 aa).

The PDZ domain maps to 18–106 (AVELHKQEVI…DRAVKFIKQS (89 aa)).

May regulate a number of protein-protein interactions by competing for PDZ domain binding sites. The polypeptide is Tax1-binding protein 3 homolog (Caenorhabditis elegans).